Here is a 276-residue protein sequence, read N- to C-terminus: Large ribosomal subunit protein uL2 (276 aa).

The tract at residues 223-276 is disordered; the sequence is GVAMNPVDHPHGGGEGRGKGHHPTSPWGLPTKGYKTRRGKRPSDKFIVRRRNEV. Basic and acidic residues-rich tracts occupy residues 230–240 and 263–276; these read DHPHGGGEGRG and RPSD…RNEV.

This sequence belongs to the universal ribosomal protein uL2 family. As to quaternary structure, part of the 50S ribosomal subunit. Forms a bridge to the 30S subunit in the 70S ribosome.

One of the primary rRNA binding proteins. Required for association of the 30S and 50S subunits to form the 70S ribosome, for tRNA binding and peptide bond formation. It has been suggested to have peptidyltransferase activity; this is somewhat controversial. Makes several contacts with the 16S rRNA in the 70S ribosome. The sequence is that of Large ribosomal subunit protein uL2 from Thermotoga neapolitana (strain ATCC 49049 / DSM 4359 / NBRC 107923 / NS-E).